A 345-amino-acid polypeptide reads, in one-letter code: Holliday junction branch migration complex subunit RuvB (345 aa).

Positions 4 to 185 (LDNRFVTPLS…FGVLCPMEFY (182 aa)) are large ATPase domain (RuvB-L). Residues leucine 24, arginine 25, glycine 66, lysine 69, threonine 70, threonine 71, 132 to 134 (EDY), arginine 175, tyrosine 185, and arginine 222 each bind ATP. Threonine 70 serves as a coordination point for Mg(2+). Positions 186 to 256 (NEEELKDIIV…MTNKALNLLE (71 aa)) are small ATPAse domain (RuvB-S). Residues 259–345 (KEGFDSIDTK…ENINQYKFKI (87 aa)) form a head domain (RuvB-H) region. 2 residues coordinate DNA: arginine 314 and arginine 319.

Belongs to the RuvB family. Homohexamer. Forms an RuvA(8)-RuvB(12)-Holliday junction (HJ) complex. HJ DNA is sandwiched between 2 RuvA tetramers; dsDNA enters through RuvA and exits via RuvB. An RuvB hexamer assembles on each DNA strand where it exits the tetramer. Each RuvB hexamer is contacted by two RuvA subunits (via domain III) on 2 adjacent RuvB subunits; this complex drives branch migration. In the full resolvosome a probable DNA-RuvA(4)-RuvB(12)-RuvC(2) complex forms which resolves the HJ.

The protein resides in the cytoplasm. It catalyses the reaction ATP + H2O = ADP + phosphate + H(+). The RuvA-RuvB-RuvC complex processes Holliday junction (HJ) DNA during genetic recombination and DNA repair, while the RuvA-RuvB complex plays an important role in the rescue of blocked DNA replication forks via replication fork reversal (RFR). RuvA specifically binds to HJ cruciform DNA, conferring on it an open structure. The RuvB hexamer acts as an ATP-dependent pump, pulling dsDNA into and through the RuvAB complex. RuvB forms 2 homohexamers on either side of HJ DNA bound by 1 or 2 RuvA tetramers; 4 subunits per hexamer contact DNA at a time. Coordinated motions by a converter formed by DNA-disengaged RuvB subunits stimulates ATP hydrolysis and nucleotide exchange. Immobilization of the converter enables RuvB to convert the ATP-contained energy into a lever motion, pulling 2 nucleotides of DNA out of the RuvA tetramer per ATP hydrolyzed, thus driving DNA branch migration. The RuvB motors rotate together with the DNA substrate, which together with the progressing nucleotide cycle form the mechanistic basis for DNA recombination by continuous HJ branch migration. Branch migration allows RuvC to scan DNA until it finds its consensus sequence, where it cleaves and resolves cruciform DNA. The sequence is that of Holliday junction branch migration complex subunit RuvB from Clostridium tetani (strain Massachusetts / E88).